The following is an 839-amino-acid chain: Protein translocase subunit SecA (839 aa).

Residues glutamine 85, 103-107, and aspartate 493 contribute to the ATP site; that span reads GEGKT. Over residues 780-790 the composition is skewed to basic and acidic residues; it reads QIHEQERERAS. The segment at 780–839 is disordered; the sequence is QIHEQERERASQRATTAAPQNIQSQQSANTDDLPKVERNEACPCGSGKKFKNCHGRKSFS. A compositionally biased stretch (polar residues) spans 791–809; that stretch reads QRATTAAPQNIQSQQSANT. Cysteine 821, cysteine 823, cysteine 832, and histidine 833 together coordinate Zn(2+). The span at 827 to 839 shows a compositional bias: basic residues; that stretch reads KKFKNCHGRKSFS.

The protein belongs to the SecA family. Monomer and homodimer. Part of the essential Sec protein translocation apparatus which comprises SecA, SecYEG and auxiliary proteins SecDF. Other proteins may also be involved. It depends on Zn(2+) as a cofactor.

Its subcellular location is the cell membrane. The protein resides in the cytoplasm. The enzyme catalyses ATP + H2O + cellular proteinSide 1 = ADP + phosphate + cellular proteinSide 2.. Part of the Sec protein translocase complex. Interacts with the SecYEG preprotein conducting channel. Has a central role in coupling the hydrolysis of ATP to the transfer of proteins into and across the cell membrane, serving as an ATP-driven molecular motor driving the stepwise translocation of polypeptide chains across the membrane. The sequence is that of Protein translocase subunit SecA from Streptococcus pyogenes serotype M3 (strain ATCC BAA-595 / MGAS315).